We begin with the raw amino-acid sequence, 193 residues long: Intracellular heme transport protein HutX (193 aa).

Tyr116 is a binding site for heme.

Homodimer. Interacts with HutZ.

The protein localises to the cytoplasm. In terms of biological role, binds heme. Heme is transferred to the heme-degrading enzyme HutZ via a specific protein-protein interaction. The polypeptide is Intracellular heme transport protein HutX (Vibrio cholerae serotype O1 (strain ATCC 39315 / El Tor Inaba N16961)).